The primary structure comprises 382 residues: 8-amino-7-oxononanoate synthase (382 aa).

Substrate contacts are provided by Arg-22 and Arg-29. 109–110 is a binding site for pyridoxal 5'-phosphate; it reads GF. His-134 is a binding site for substrate. Residues Ser-182, 207-210, and 233-236 contribute to the pyridoxal 5'-phosphate site; these read DDAH and TLSK. The residue at position 236 (Lys-236) is an N6-(pyridoxal phosphate)lysine. Thr-345 serves as a coordination point for substrate.

Belongs to the class-II pyridoxal-phosphate-dependent aminotransferase family. BioF subfamily. As to quaternary structure, homodimer. Pyridoxal 5'-phosphate serves as cofactor.

It catalyses the reaction 6-carboxyhexanoyl-[ACP] + L-alanine + H(+) = (8S)-8-amino-7-oxononanoate + holo-[ACP] + CO2. The protein operates within cofactor biosynthesis; biotin biosynthesis. Its function is as follows. Catalyzes the decarboxylative condensation of pimeloyl-[acyl-carrier protein] and L-alanine to produce 8-amino-7-oxononanoate (AON), [acyl-carrier protein], and carbon dioxide. The protein is 8-amino-7-oxononanoate synthase of Granulibacter bethesdensis (strain ATCC BAA-1260 / CGDNIH1).